The chain runs to 172 residues: MKLGIVIFPSKMIQDKANGLRKRYDPHYALVPPHITLKTPFEAQDEQLESIVNELHTIASKTNPFTLHVGKVGSFAPVNNVLYFKVEKTPELTFLNEEMHSGLFTQEREYAFVPHLTIGQGLSDAEHADVLGRLRMKDFYYEQPIDRFHLLYQLENGTWTVHETFRLGKGNN.

Histidine 34 (proton donor) is an active-site residue. Short sequence motifs (HXTX) lie at residues 34–37 (HITL) and 115–118 (HLTI). Histidine 115 functions as the Proton acceptor in the catalytic mechanism.

It belongs to the 2H phosphoesterase superfamily. YjcG family.

This Bacillus cereus (strain ATCC 14579 / DSM 31 / CCUG 7414 / JCM 2152 / NBRC 15305 / NCIMB 9373 / NCTC 2599 / NRRL B-3711) protein is Putative phosphoesterase BC_1225.